Consider the following 625-residue polypeptide: Phosphomethylpyrimidine synthase (625 aa).

Substrate is bound by residues Asn-230, Met-259, Tyr-288, His-324, 344 to 346, 385 to 388, and Glu-424; these read SRG and DGLR. Position 428 (His-428) interacts with Zn(2+). Substrate is bound at residue Tyr-451. Zn(2+) is bound at residue His-492. 3 residues coordinate [4Fe-4S] cluster: Cys-572, Cys-575, and Cys-580.

This sequence belongs to the ThiC family. As to quaternary structure, homodimer. [4Fe-4S] cluster serves as cofactor.

It catalyses the reaction 5-amino-1-(5-phospho-beta-D-ribosyl)imidazole + S-adenosyl-L-methionine = 4-amino-2-methyl-5-(phosphooxymethyl)pyrimidine + CO + 5'-deoxyadenosine + formate + L-methionine + 3 H(+). It functions in the pathway cofactor biosynthesis; thiamine diphosphate biosynthesis. Its function is as follows. Catalyzes the synthesis of the hydroxymethylpyrimidine phosphate (HMP-P) moiety of thiamine from aminoimidazole ribotide (AIR) in a radical S-adenosyl-L-methionine (SAM)-dependent reaction. The polypeptide is Phosphomethylpyrimidine synthase (Xanthomonas campestris pv. campestris (strain 8004)).